The sequence spans 1482 residues: Cystic fibrosis transmembrane conductance regulator (1482 aa).

Topologically, residues 1–77 (MQKSPLERAS…KLINALRRCF (77 aa)) are cytoplasmic. A helical membrane pass occupies residues 78–98 (FWRFVFYGILLYLGEVTKAVQ). Positions 81–365 (FVFYGILLYL…WAVQTWYDSL (285 aa)) constitute an ABC transmembrane type-1 1 domain. Topologically, residues 99 to 122 (PLLLGRIIASYDPDNKVERSIAIY) are extracellular. A helical membrane pass occupies residues 123-146 (LAIGLCLLFIVRTLLLHPAIFGLH). The Cytoplasmic segment spans residues 147 to 195 (HMGMQMRIAMFSLIYKKTLKLSSRVLDKISIGQLVSLLSNNLNKFDEGL). A helical transmembrane segment spans residues 196-216 (ALAHFVWIAPLQVTLLMGLIW). The Extracellular portion of the chain corresponds to 217–222 (DLLQAS). A helical transmembrane segment spans residues 223 to 243 (AFCGLAFLIIVALGQAGLGRM). Topologically, residues 244–298 (MMKYRDKRAGKINERLVITSEMIENIQSVKAYCWEEAMEKMIENLRQIELRLTRK) are cytoplasmic. A helical membrane pass occupies residues 299–319 (AAYVRYFNSAAFFFSGFFVVF). Over 320-339 (LSVLPYAMLKGIILRKIFTT) the chain is Extracellular. Residues 340 to 358 (ISFCIVLRMAVTRQFPWAV) form a helical membrane-spanning segment. Residues 359–858 (QTWYDSLGAI…YLRYVTVHKS (500 aa)) are Cytoplasmic-facing. ATP-binding positions include Trp401, Ser434, 458-465 (GSTGAGKT), and Gln493. The region spanning 423–646 (NGDNSLFFSN…RPDFSSELMG (224 aa)) is the ABC transporter 1 domain. Cys524 carries the S-palmitoyl cysteine lipid modification. Phosphoserine is present on residues Ser549 and Ser660. Positions 654–831 (SAERRNSILT…EEINEEDLKE (178 aa)) are disordered R region. A Phosphoserine; by PKA modification is found at Ser670. Ser685 carries the phosphoserine modification. Lys687 is covalently cross-linked (Glycyl lysine isopeptide (Lys-Gly) (interchain with G-Cter in ubiquitin)). Residues Ser699 and Ser711 each carry the phosphoserine modification. A Phosphothreonine modification is found at Thr716. Phosphoserine occurs at positions 736, 767, 790, 795, and 813. A helical membrane pass occupies residues 859 to 879 (LIFVLIWCLVVFLAEVAVSLV). Residues 859-1156 (LIFVLIWCLV…AVNSSIDVDS (298 aa)) enclose the ABC transmembrane type-1 2 domain. The Extracellular portion of the chain corresponds to 880-919 (VLYLLRTSSLQDKGNNTTVNANSSYGVIVTNTSSYYLLYI). Residues Asn894, Asn895, Asn901, and Asn910 are each glycosylated (N-linked (GlcNAc...) asparagine). A discontinuously helical transmembrane segment spans residues 920 to 940 (YVGIADSLFALAIFRGLPLVH). Residues 941–991 (TLIKVSKTLHHKMLRSILQAPMSTFNTLKAGRILNRFSKDIAILDDLLPLT) are Cytoplasmic-facing. Residues 992-1012 (MFDFIQLLLIVIGAVVVVSVL) form a helical membrane-spanning segment. Topologically, residues 1013–1014 (QP) are extracellular. The helical transmembrane segment at 1015–1035 (YIFLATVPVIAAFIILRAYFL) threads the bilayer. The Cytoplasmic portion of the chain corresponds to 1036–1096 (HTSQQLKQLE…TANWFLYLST (61 aa)). Residues 1097–1117 (LRWFQMRIEIIFVIFFIAVTF) form a helical membrane-spanning segment. Topologically, residues 1118–1131 (VSILTTGEGEGTIG) are extracellular. The chain crosses the membrane as a helical span at residues 1132 to 1152 (IILTLAMNIMNTLQWAVNSSI). The Cytoplasmic segment spans residues 1153–1482 (DVDSLMRSVS…TEEEVQETRL (330 aa)). An ABC transporter 2 domain is found at 1212–1445 (MTVKDLTAKY…KSLFRQAISP (234 aa)). ATP-binding positions include Tyr1221 and 1246-1253 (GRTGSGKS). Positions 1388 to 1482 (RTLKQAFADC…TEEEVQETRL (95 aa)) are interaction with GORASP2. The S-palmitoyl cysteine moiety is linked to residue Cys1397. Over residues 1454 to 1463 (HRNSSRHRSR) the composition is skewed to basic residues. The segment at 1454–1482 (HRNSSRHRSRSQIAALKEETEEEVQETRL) is disordered. Phosphoserine is present on Ser1458. The span at 1472 to 1482 (ETEEEVQETRL) shows a compositional bias: acidic residues. A PDZ-binding motif is present at residues 1480-1482 (TRL).

The protein belongs to the ABC transporter superfamily. ABCC family. CFTR transporter (TC 3.A.1.202) subfamily. Monomer; does not require oligomerization for channel activity. May form oligomers in the membrane. Interacts with SLC26A3, SLC26A6 and NHERF1. Interacts with SHANK2. Interacts with MYO6. Interacts (via C-terminus) with GOPC (via PDZ domain); this promotes CFTR internalization and thereby decreases channel activity. Interacts with SLC4A7 through NHERF1. Found in a complex with MYO5B and RAB11A. Interacts with ANO1. Interacts with SLC26A8. Interacts with AHCYL1; the interaction increases CFTR activity. Interacts with CSE1L. The core-glycosylated form interacts with GORASP2 (via PDZ GRASP-type 1 domain) in respone to ER stress. Interacts with MARCHF2; the interaction leads to CFTR ubiqtuitination and degradation. Interacts with ADGRG2. In terms of processing, N-glycosylated. Post-translationally, phosphorylated; cAMP treatment promotes phosphorylation and activates the channel. Dephosphorylation decreases the ATPase activity (in vitro). Phosphorylation at PKA sites activates the channel. Phosphorylation at PKC sites enhances the response to phosphorylation by PKA. Phosphorylated by AMPK; this inhibits channel activity. Ubiquitinated, leading to its degradation in the lysosome. Deubiquitination by USP10 in early endosomes enhances its endocytic recycling to the cell membrane. Ubiquitinated by RNF185 during ER stress. Ubiquitinated by MARCHF2.

The protein resides in the apical cell membrane. The protein localises to the early endosome membrane. It is found in the cell membrane. Its subcellular location is the recycling endosome membrane. It localises to the endoplasmic reticulum membrane. The protein resides in the nucleus. It catalyses the reaction ATP + H2O + closed Cl(-) channel = ADP + phosphate + open Cl(-) channel.. It carries out the reaction chloride(in) = chloride(out). The enzyme catalyses hydrogencarbonate(in) = hydrogencarbonate(out). The catalysed reaction is ATP + H2O = ADP + phosphate + H(+). Functionally, epithelial ion channel that plays an important role in the regulation of epithelial ion and water transport and fluid homeostasis. Mediates the transport of chloride ions across the cell membrane. Possesses an intrinsic ATPase activity and utilizes ATP to gate its channel; the passive flow of anions through the channel is gated by cycles of ATP binding and hydrolysis by the ATP-binding domains. The ion channel is also permeable to HCO(3)(-); selectivity depends on the extracellular chloride concentration. Exerts its function also by modulating the activity of other ion channels and transporters. Contributes to the regulation of the pH and the ion content of the epithelial fluid layer. Modulates the activity of the epithelial sodium channel (ENaC) complex, in part by regulating the cell surface expression of the ENaC complex. May regulate bicarbonate secretion and salvage in epithelial cells by regulating the transporter SLC4A7. Can inhibit the chloride channel activity of ANO1. Plays a role in the chloride and bicarbonate homeostasis during sperm epididymal maturation and capacitation. This is Cystic fibrosis transmembrane conductance regulator from Loxodonta africana (African elephant).